The sequence spans 185 residues: Ribosome maturation factor RimM (185 aa).

The region spanning 105-184 is the PRC barrel domain; that stretch reads KDEYYWKDII…IVVVDWEIYK (80 aa).

This sequence belongs to the RimM family. Binds ribosomal protein uS19.

The protein resides in the cytoplasm. In terms of biological role, an accessory protein needed during the final step in the assembly of 30S ribosomal subunit, possibly for assembly of the head region. Essential for efficient processing of 16S rRNA. May be needed both before and after RbfA during the maturation of 16S rRNA. It has affinity for free ribosomal 30S subunits but not for 70S ribosomes. This chain is Ribosome maturation factor RimM, found in Blochmanniella floridana.